A 102-amino-acid polypeptide reads, in one-letter code: uncharacterized protein (102 aa).

Belongs to the Gram-positive plasmids replication protein type 2 family.

This is an uncharacterized protein from Staphylococcus aureus.